A 66-amino-acid chain; its full sequence is U-limacoditoxin(59)-Dv128 (66 aa).

Residues 1–20 (MRHLLVLLLICLSVIAMAQA) form the signal peptide. Residues 21 to 66 (TFGGGLGGAVGGRRRRDIGGGLGGAVGGRRRRDIGGGLGGAVGGKS) form a 3 X 16 AA tandem repeats of [FI]-G-G-G-L-G-G-A-V-G-G-R-R-R-R-D region. Tandem repeats lie at residues 22–37 (FGGG…RRRD) and 38–53 (IGGG…RRRD). Glycine 31 is modified (glycine amide). Residues 33–37 (RRRRD) constitute a propeptide that is removed on maturation. Glycine amide is present on glycine 47. The propeptide occupies 49–53 (RRRRD). Residues 54-64 (IGGGLGGAVGG) form a 3; half-length repeat.

Belongs to the limacoditoxin-59 family. In terms of tissue distribution, expressed by the venom secretory cell of the spine. The spine is a cuticular structure containing a single large nucleated venom-secreting cell at its base. It is an independent unit capable of producing, storing and injecting venom. On the back of D.vulnerans caterpillars, spines are grouped together by 50 to 100 to form scoli, of which there are eight in D.vulnerans.

It localises to the secreted. Functionally, probable toxin. The sequence is that of U-limacoditoxin(59)-Dv128 from Doratifera vulnerans (Mottled cup moth).